The sequence spans 150 residues: UPF0756 membrane protein YPN_1328 (150 aa).

4 helical membrane passes run Ala-16–Ile-36, Tyr-51–Gly-71, Ile-88–Met-108, and Val-114–Val-134.

This sequence belongs to the UPF0756 family.

Its subcellular location is the cell membrane. The protein is UPF0756 membrane protein YPN_1328 of Yersinia pestis bv. Antiqua (strain Nepal516).